The primary structure comprises 270 residues: NAD kinase (270 aa).

Catalysis depends on D49, which acts as the Proton acceptor. Residues D49–G50, R54, N126–E127, R152, D154, T165–S170, A189, and Q227 contribute to the NAD(+) site.

The protein belongs to the NAD kinase family. A divalent metal cation is required as a cofactor.

Its subcellular location is the cytoplasm. The enzyme catalyses NAD(+) + ATP = ADP + NADP(+) + H(+). Involved in the regulation of the intracellular balance of NAD and NADP, and is a key enzyme in the biosynthesis of NADP. Catalyzes specifically the phosphorylation on 2'-hydroxyl of the adenosine moiety of NAD to yield NADP. In Lactococcus lactis subsp. cremoris (strain SK11), this protein is NAD kinase.